Here is a 101-residue protein sequence, read N- to C-terminus: Urease subunit beta (101 aa).

This sequence belongs to the urease beta subunit family. As to quaternary structure, heterotrimer of UreA (gamma), UreB (beta) and UreC (alpha) subunits. Three heterotrimers associate to form the active enzyme.

The protein localises to the cytoplasm. It catalyses the reaction urea + 2 H2O + H(+) = hydrogencarbonate + 2 NH4(+). It participates in nitrogen metabolism; urea degradation; CO(2) and NH(3) from urea (urease route): step 1/1. The chain is Urease subunit beta from Verminephrobacter eiseniae (strain EF01-2).